Reading from the N-terminus, the 278-residue chain is Pantothenate synthetase (278 aa).

26–33 (MGNLHEGH) is an ATP binding site. H33 acts as the Proton donor in catalysis. Residue Q57 coordinates (R)-pantoate. Q57 lines the beta-alanine pocket. 144 to 147 (GKKD) contributes to the ATP binding site. Residue Q150 coordinates (R)-pantoate. ATP-binding positions include G173 and 181–184 (LSSR).

The protein belongs to the pantothenate synthetase family. As to quaternary structure, homodimer.

It is found in the cytoplasm. The catalysed reaction is (R)-pantoate + beta-alanine + ATP = (R)-pantothenate + AMP + diphosphate + H(+). Its pathway is cofactor biosynthesis; (R)-pantothenate biosynthesis; (R)-pantothenate from (R)-pantoate and beta-alanine: step 1/1. Functionally, catalyzes the condensation of pantoate with beta-alanine in an ATP-dependent reaction via a pantoyl-adenylate intermediate. In Neisseria meningitidis serogroup A / serotype 4A (strain DSM 15465 / Z2491), this protein is Pantothenate synthetase.